A 156-amino-acid polypeptide reads, in one-letter code: Cell division protein SepF (156 aa).

A compositionally biased stretch (basic and acidic residues) spans 23 to 36 (SYEKEQTDMKKQQD). A disordered region spans residues 23-49 (SYEKEQTDMKKQQDPPEQQDVTFPKAQ).

This sequence belongs to the SepF family. Homodimer. Interacts with FtsZ.

It localises to the cytoplasm. In terms of biological role, cell division protein that is part of the divisome complex and is recruited early to the Z-ring. Probably stimulates Z-ring formation, perhaps through the cross-linking of FtsZ protofilaments. Its function overlaps with FtsA. The protein is Cell division protein SepF of Bacillus anthracis (strain CDC 684 / NRRL 3495).